Reading from the N-terminus, the 122-residue chain is Small ribosomal subunit protein uS13 (122 aa).

Positions 95–122 (GLPVHGQRTHTNARTRKGPRRGAVGKKK) are disordered.

The protein belongs to the universal ribosomal protein uS13 family. As to quaternary structure, part of the 30S ribosomal subunit. Forms a loose heterodimer with protein S19. Forms two bridges to the 50S subunit in the 70S ribosome.

In terms of biological role, located at the top of the head of the 30S subunit, it contacts several helices of the 16S rRNA. In the 70S ribosome it contacts the 23S rRNA (bridge B1a) and protein L5 of the 50S subunit (bridge B1b), connecting the 2 subunits; these bridges are implicated in subunit movement. Contacts the tRNAs in the A and P-sites. The sequence is that of Small ribosomal subunit protein uS13 from Nitratidesulfovibrio vulgaris (strain DSM 19637 / Miyazaki F) (Desulfovibrio vulgaris).